Consider the following 210-residue polypeptide: Glutathione S-transferase P (210 aa).

The region spanning 2–81 (PPYTIVYFPV…HLGRTLGLYG (80 aa)) is the GST N-terminal domain. Phosphotyrosine; by EGFR is present on Tyr4. Glutathione contacts are provided by residues Tyr8, Arg14, Trp39, Lys45, and 52 to 53 (QL). The residue at position 62 (Thr62) is a Phosphothreonine. Position 65–66 (65–66 (QS)) interacts with glutathione. The 122-residue stretch at 83–204 (DQQEAALVDM…ASPEHMNRPI (122 aa)) folds into the GST C-terminal domain. N6-succinyllysine is present on residues Lys103 and Lys116. The residue at position 128 (Lys128) is an N6-acetyllysine.

This sequence belongs to the GST superfamily. Pi family. As to quaternary structure, homodimer. Interacts with CDK5.

It localises to the cytoplasm. Its subcellular location is the mitochondrion. It is found in the nucleus. The catalysed reaction is RX + glutathione = an S-substituted glutathione + a halide anion + H(+). It carries out the reaction prostaglandin J2 + glutathione = prostaglandin J2-S-(R)-glutathione. It catalyses the reaction prostaglandin J2 + glutathione = prostaglandin J2-S-(S)-glutathione. The enzyme catalyses prostaglandin A2 + glutathione = prostaglandin A2-S-(S)-glutathione. The catalysed reaction is 11(S)-hydroxy-14(S),15(S)-epoxy-(5Z,8Z,12E)-eicosatrienoate + glutathione = (11S,15S)-dihydroxy-14(R)-S-glutathionyl-(5Z,8Z,12E)-eicosatrienoate. Functionally, conjugation of reduced glutathione to a wide number of exogenous and endogenous hydrophobic electrophiles. Involved in the formation of glutathione conjugates of both prostaglandin A2 (PGA2) and prostaglandin J2 (PGJ2). Participates in the formation of novel hepoxilin regioisomers. Negatively regulates CDK5 activity via p25/p35 translocation to prevent neurodegeneration. The chain is Glutathione S-transferase P (GSTP1) from Bos taurus (Bovine).